The following is a 313-amino-acid chain: Solute carrier family 35 member E3 (313 aa).

Helical transmembrane passes span 17-37 (GLLL…WIYV), 40-60 (GFPN…GLYV), 77-97 (LLLL…SLQN), 100-120 (IGTY…IQTL), 130-147 (IRLT…NSYY), 153-173 (FLGT…QVWV), 187-206 (LLYY…VPFF), 225-245 (LMVL…YWII), 252-272 (TYNM…YVLF), and 275-295 (PLSI…LAYT).

The protein belongs to the TPT transporter family. SLC35E subfamily.

Its subcellular location is the membrane. Its function is as follows. Putative transporter. This Bos taurus (Bovine) protein is Solute carrier family 35 member E3 (SLC35E3).